Reading from the N-terminus, the 313-residue chain is Protein-methionine-sulfoxide reductase catalytic subunit MsrP (313 aa).

The tat-type signal signal peptide spans 1–44 (MARWRPDMAEREATPEALYLRRRDFLALGAAGAVGLLLPRGARA). Residues asparagine 76, 79–80 (YE), cysteine 134, threonine 169, asparagine 217, arginine 222, and 233–235 (GAK) each bind Mo-molybdopterin.

This sequence belongs to the MsrP family. In terms of assembly, heterodimer of a catalytic subunit (MsrP) and a heme-binding subunit (MsrQ). Requires Mo-molybdopterin as cofactor. Predicted to be exported by the Tat system. The position of the signal peptide cleavage has not been experimentally proven.

The protein resides in the periplasm. The enzyme catalyses L-methionyl-[protein] + a quinone + H2O = L-methionyl-(S)-S-oxide-[protein] + a quinol. It carries out the reaction L-methionyl-[protein] + a quinone + H2O = L-methionyl-(R)-S-oxide-[protein] + a quinol. Its function is as follows. Part of the MsrPQ system that repairs oxidized periplasmic proteins containing methionine sulfoxide residues (Met-O), using respiratory chain electrons. Thus protects these proteins from oxidative-stress damage caused by reactive species of oxygen and chlorine generated by the host defense mechanisms. MsrPQ is essential for the maintenance of envelope integrity under bleach stress, rescuing a wide series of structurally unrelated periplasmic proteins from methionine oxidation. The catalytic subunit MsrP is non-stereospecific, being able to reduce both (R-) and (S-) diastereoisomers of methionine sulfoxide. The sequence is that of Protein-methionine-sulfoxide reductase catalytic subunit MsrP from Anaeromyxobacter dehalogenans (strain 2CP-1 / ATCC BAA-258).